The following is a 599-amino-acid chain: uncharacterized protein (599 aa).

Polar residues predominate over residues 1 to 10; the sequence is MEQQSENVYF. A disordered region spans residues 1–146; it reads MEQQSENVYF…EPSFTLTELP (146 aa). Positions 11-20 are enriched in low complexity; the sequence is SGSESESLSD. Residues 24-44 are compositionally biased toward polar residues; that stretch reads RAQPQNQNSDNSRSASLTPPD. 2 stretches are compositionally biased toward acidic residues: residues 46–56 and 89–114; these read SDLEDYVDSDS and NGSDDDSEDEDESNDEQDLVESEEED. The segment covering 118 to 127 has biased composition (low complexity); it reads RSSSRSAMDI. Acidic residues predominate over residues 128–138; it reads SSEEDSGDDEP.

This sequence belongs to the IIV-6 229L family.

This is an uncharacterized protein from Aedes vexans (Inland floodwater mosquito).